The chain runs to 917 residues: Thiamine biosynthesis bifunctional protein ThiEC (917 aa).

A thiamine-phosphate synthase region spans residues Met-1–Lys-243. 4-amino-2-methyl-5-(diphosphooxymethyl)pyrimidine is bound by residues Gln-48–Lys-52 and Asp-84. The Mg(2+) site is built by Asp-85 and Asp-109. Residue Ser-128 coordinates 4-amino-2-methyl-5-(diphosphooxymethyl)pyrimidine. 2-[(2R,5Z)-2-carboxy-4-methylthiazol-5(2H)-ylidene]ethyl phosphate is bound at residue Ser-157–Thr-159. 4-amino-2-methyl-5-(diphosphooxymethyl)pyrimidine is bound at residue Lys-160. 2-[(2R,5Z)-2-carboxy-4-methylthiazol-5(2H)-ylidene]ethyl phosphate-binding positions include Gly-196 and Val-216–Ser-217. A disordered region spans residues Pro-256–His-311. The interval Gly-271 to Glu-917 is phosphomethylpyrimidine synthase. A compositionally biased stretch (basic and acidic residues) spans Ala-274–Lys-290. 5-amino-1-(5-phospho-beta-D-ribosyl)imidazole-binding positions include Asn-487, Met-516, Tyr-545, His-581, Ser-601–Gly-603, Asp-642–Arg-645, and Glu-681. Position 685 (His-685) interacts with Zn(2+). 5-amino-1-(5-phospho-beta-D-ribosyl)imidazole is bound at residue Tyr-708. Zn(2+) is bound at residue His-749. Positions 829, 832, and 837 each coordinate [4Fe-4S] cluster.

It in the N-terminal section; belongs to the thiamine-phosphate synthase family. This sequence in the C-terminal section; belongs to the ThiC family. [4Fe-4S] cluster is required as a cofactor.

It catalyses the reaction 2-[(2R,5Z)-2-carboxy-4-methylthiazol-5(2H)-ylidene]ethyl phosphate + 4-amino-2-methyl-5-(diphosphooxymethyl)pyrimidine + 2 H(+) = thiamine phosphate + CO2 + diphosphate. The catalysed reaction is 2-(2-carboxy-4-methylthiazol-5-yl)ethyl phosphate + 4-amino-2-methyl-5-(diphosphooxymethyl)pyrimidine + 2 H(+) = thiamine phosphate + CO2 + diphosphate. It carries out the reaction 4-methyl-5-(2-phosphooxyethyl)-thiazole + 4-amino-2-methyl-5-(diphosphooxymethyl)pyrimidine + H(+) = thiamine phosphate + diphosphate. The enzyme catalyses 5-amino-1-(5-phospho-beta-D-ribosyl)imidazole + S-adenosyl-L-methionine = 4-amino-2-methyl-5-(phosphooxymethyl)pyrimidine + CO + 5'-deoxyadenosine + formate + L-methionine + 3 H(+). The protein operates within cofactor biosynthesis; thiamine diphosphate biosynthesis; thiamine phosphate from 4-amino-2-methyl-5-diphosphomethylpyrimidine and 4-methyl-5-(2-phosphoethyl)-thiazole: step 1/1. Its function is as follows. Condenses 4-methyl-5-(beta-hydroxyethyl)thiazole monophosphate (THZ-P) and 2-methyl-4-amino-5-hydroxymethyl pyrimidine pyrophosphate (HMP-PP) to form thiamine monophosphate (TMP). In terms of biological role, catalyzes the synthesis of the hydroxymethylpyrimidine phosphate (HMP-P) moiety of thiamine from aminoimidazole ribotide (AIR) in a radical S-adenosyl-L-methionine (SAM)-dependent reaction. The chain is Thiamine biosynthesis bifunctional protein ThiEC (thiE/thiC) from Bifidobacterium longum (strain NCC 2705).